The following is a 151-amino-acid chain: Large ribosomal subunit protein uL13 (151 aa).

Belongs to the universal ribosomal protein uL13 family. In terms of assembly, part of the 50S ribosomal subunit.

This protein is one of the early assembly proteins of the 50S ribosomal subunit, although it is not seen to bind rRNA by itself. It is important during the early stages of 50S assembly. This chain is Large ribosomal subunit protein uL13, found in Picosynechococcus sp. (strain ATCC 27264 / PCC 7002 / PR-6) (Agmenellum quadruplicatum).